A 560-amino-acid polypeptide reads, in one-letter code: MKQSYDYIIIGGGSAGSVLGSRISEDVSNNVLVLEAGRSDYPWDLLIQMPAALMYPAGNKLYDWIYETTPEPHMDGRKVGHARGKVLGGSSSINGMIYQRGNPMDYEKWAKPEGMDSWDYAHCLPYFKRLEKTFGATKDDQFRGHHGPIKLRRGPADNPLFQAFFDAGVEAGYNKTPDVNGFRQEGFGPFDSQVHNGRRVSASRAYLHPAMKRKNLEVQTRAFVTKLNFEGNKVTGVTFKKNGREHTVNAKEVILSGGAINSPQLLQLSGIGDSEHLRSLGIEPRIHLPGVGENFEDHLEVYVQHACKEPVSMQPSLNKLKMPFIGLQWIFGRKGAAASNHFEGGGFVRSNEDVDYPNLMFHFLPIAVRYDGTKAPAAHGYQVHVGPMYSNSRGHLKIKSKDPFVKPDFVFNYLSTEEDKREWVEAIKVARNILGQKALDPYNGGEISPGPEVQTDEEIIEWVKRDGETALHPSCSCRMGPASDEMSVVDPETFKVHGMENLRVVDASVMPRTTNGNIHSPVLMMAEKAADIIRGKKPLDPEYIDFYRHGVHDKDAGTIK.

6-35 serves as a coordination point for FAD; the sequence is DYIIIGGGSAGSVLGSRISEDVSNNVLVLE. Catalysis depends on H472, which acts as the Proton acceptor.

This sequence belongs to the GMC oxidoreductase family. Requires FAD as cofactor.

It catalyses the reaction choline + A = betaine aldehyde + AH2. It carries out the reaction betaine aldehyde + NAD(+) + H2O = glycine betaine + NADH + 2 H(+). The protein operates within amine and polyamine biosynthesis; betaine biosynthesis via choline pathway; betaine aldehyde from choline (cytochrome c reductase route): step 1/1. In terms of biological role, involved in the biosynthesis of the osmoprotectant glycine betaine. Catalyzes the oxidation of choline to betaine aldehyde and betaine aldehyde to glycine betaine at the same rate. The sequence is that of Oxygen-dependent choline dehydrogenase from Staphylococcus saprophyticus subsp. saprophyticus (strain ATCC 15305 / DSM 20229 / NCIMB 8711 / NCTC 7292 / S-41).